A 159-amino-acid chain; its full sequence is Carbohydrate sulfotransferase 15 (159 aa).

Residues 1–159 (SGTTDFYRRI…YQPHNERLVK (159 aa)) lie on the Lumenal side of the membrane. N42 and N112 each carry an N-linked (GlcNAc...) asparagine glycan.

It belongs to the sulfotransferase 1 family. It depends on a divalent metal cation as a cofactor. The cofactor is glutathione.

Its subcellular location is the golgi apparatus membrane. It carries out the reaction dermatan 4'-sulfate + n 3'-phosphoadenylyl sulfate = dermatan 4',6'-bissulfate + n adenosine 3',5'-bisphosphate + n H(+). The enzyme catalyses chondroitin 4'-sulfate + n 3'-phosphoadenylyl sulfate = chondroitin 4',6'-bissulfate + n adenosine 3',5'-bisphosphate + n H(+). Sulfotransferase that transfers sulfate from 3'-phosphoadenosine 5'-phosphosulfate (PAPS) to the C-6 hydroxyl group of the GalNAc 4-sulfate residue of chondroitin sulfate A and forms chondroitin sulfate E containing GlcA-GalNAc(4,6-SO(4)) repeating units. This is Carbohydrate sulfotransferase 15 (GALNAC4S6ST) from Nototodarus sloanii (Wellington flying squid).